The chain runs to 525 residues: GMP synthase [glutamine-hydrolyzing] (525 aa).

A Glutamine amidotransferase type-1 domain is found at 9 to 207 (RILILDFGSQ…VHEICGCPAD (199 aa)). Cys86 acts as the Nucleophile in catalysis. Catalysis depends on residues His181 and Glu183. Positions 208 to 400 (WTPGNIVDDL…LGLPADMVYR (193 aa)) constitute a GMPS ATP-PPase domain. 235-241 (SGGVDSS) lines the ATP pocket.

As to quaternary structure, homodimer.

It catalyses the reaction XMP + L-glutamine + ATP + H2O = GMP + L-glutamate + AMP + diphosphate + 2 H(+). The protein operates within purine metabolism; GMP biosynthesis; GMP from XMP (L-Gln route): step 1/1. In terms of biological role, catalyzes the synthesis of GMP from XMP. In Alkalilimnicola ehrlichii (strain ATCC BAA-1101 / DSM 17681 / MLHE-1), this protein is GMP synthase [glutamine-hydrolyzing].